The primary structure comprises 330 residues: MGGIPSEQSPCALGCERQALVQVLRSYSQLVKPKIIALLLMTTAGAMWMAGNTDPFRFFITLLGGGIAAAAANVINMVYDTDIDRMMERTRHRPLPSGRIRARDALIFSGILALAAFGLLAIFTNLLAAGLAMSGILVYVGVYTHWLKRSSTQNIVIGGAAGAIPPLVGWAATTGELSWAAWVMFAIIFLWTPPHFWALAILKREDYARAGVPMLPVVAGERITAAQILLYALLMVPVSLLLVYPLGMLGSFYLSAAALLGSLLVWKAVQLLQDPCDRDRAASLFTFANLYLLLLCGAMGLDRWSLTHILWSQATASLQGIYTTLIALAS.

Helical transmembrane passes span 30 to 50 (LVKP…MWMA), 58 to 78 (FFIT…INMV), 106 to 126 (LIFS…FTNL), 127 to 147 (LAAG…THWL), 155 to 175 (IVIG…ATTG), 182 to 202 (WVMF…LAIL), 228 to 248 (ILLY…PLGM), 249 to 269 (LGSF…WKAV), and 281 to 301 (AASL…AMGL).

The protein belongs to the UbiA prenyltransferase family. Protoheme IX farnesyltransferase subfamily.

Its subcellular location is the cell inner membrane. It catalyses the reaction heme b + (2E,6E)-farnesyl diphosphate + H2O = Fe(II)-heme o + diphosphate. The protein operates within porphyrin-containing compound metabolism; heme O biosynthesis; heme O from protoheme: step 1/1. Its function is as follows. Converts heme B (protoheme IX) to heme O by substitution of the vinyl group on carbon 2 of heme B porphyrin ring with a hydroxyethyl farnesyl side group. This chain is Protoheme IX farnesyltransferase, found in Synechococcus sp. (strain JA-2-3B'a(2-13)) (Cyanobacteria bacterium Yellowstone B-Prime).